Here is a 182-residue protein sequence, read N- to C-terminus: Chromophore lyase CpcS/CpeS (182 aa).

Belongs to the CpcS/CpeS biliprotein lyase family.

Covalently attaches a chromophore to Cys residue(s) of phycobiliproteins. This is Chromophore lyase CpcS/CpeS from Thermosynechococcus vestitus (strain NIES-2133 / IAM M-273 / BP-1).